The following is a 759-amino-acid chain: Protein zyg-11 homolog A (759 aa).

LRR repeat units lie at residues 204 to 227, 235 to 260, and 490 to 513; these read LPRL…LTCK, MHYL…CLLH, and VTSI…FMAV.

Belongs to the zyg-11 family.

Its function is as follows. Probably acts as a target recruitment subunit in an E3 ubiquitin ligase complex ZYGA-CUL2-elongin BC. This chain is Protein zyg-11 homolog A (ZYG11A), found in Homo sapiens (Human).